A 328-amino-acid polypeptide reads, in one-letter code: Alanine racemase (328 aa).

Catalysis depends on Lys33, which acts as the Proton acceptor; specific for D-alanine. Lys33 carries the N6-(pyridoxal phosphate)lysine modification. Residue Arg118 coordinates substrate. Tyr237 serves as the catalytic Proton acceptor; specific for L-alanine. Met283 is a substrate binding site.

The protein belongs to the alanine racemase family. The cofactor is pyridoxal 5'-phosphate.

The catalysed reaction is L-alanine = D-alanine. It participates in amino-acid biosynthesis; D-alanine biosynthesis; D-alanine from L-alanine: step 1/1. In terms of biological role, catalyzes the interconversion of L-alanine and D-alanine. May also act on other amino acids. The polypeptide is Alanine racemase (alr) (Campylobacter jejuni subsp. jejuni serotype O:2 (strain ATCC 700819 / NCTC 11168)).